The chain runs to 349 residues: Glycerol-3-phosphate dehydrogenase [NAD(+)], cytoplasmic (349 aa).

Residues Gly10–Gly15, Lys120, and Ala153 contribute to the NAD(+) site. Residue Lys120 coordinates substrate. At Ser154 the chain carries Phosphoserine. Lys204 functions as the Proton acceptor in the catalytic mechanism. Position 269 (Arg269) interacts with NAD(+). Arg269–Asn270 is a binding site for substrate. The residue at position 289 (Lys289) is an N6-succinyllysine. Residues Lys296 and Gln298 each coordinate NAD(+). Tyr326 bears the Phosphotyrosine mark.

The protein belongs to the NAD-dependent glycerol-3-phosphate dehydrogenase family. Homodimer.

Its subcellular location is the cytoplasm. The enzyme catalyses sn-glycerol 3-phosphate + NAD(+) = dihydroxyacetone phosphate + NADH + H(+). Its function is as follows. Has glycerol-3-phosphate dehydrogenase activity. The chain is Glycerol-3-phosphate dehydrogenase [NAD(+)], cytoplasmic (GPD1) from Oryctolagus cuniculus (Rabbit).